A 436-amino-acid chain; its full sequence is S-locus-specific glycoprotein S6 (436 aa).

A signal peptide spans 1 to 31 (MKGVRKPYDNSYTLSFLLVFFVLILFCPAFS). The 123-residue stretch at 34–156 (TLSSTESLRI…SNNDASEYLW (123 aa)) folds into the Bulb-type lectin domain. 7 N-linked (GlcNAc...) asparagine glycosylation sites follow: asparagine 46, asparagine 64, asparagine 114, asparagine 121, asparagine 245, asparagine 261, and asparagine 390. Residues 351–431 (CSGDGFTRMK…HGQDLYVRLA (81 aa)) form the PAN domain. Disulfide bonds link cysteine 381–cysteine 406 and cysteine 389–cysteine 391.

In terms of tissue distribution, stigma.

Involved in sporophytic self-incompatibility system (the inability of flowering plants to achieve self-fertilization). The chain is S-locus-specific glycoprotein S6 (SLSG) from Brassica oleracea (Wild cabbage).